The sequence spans 271 residues: MVVAKKSLGQHFLMDESFLDRIVNALPPLNSLRLIEIGVGLGDLTLKLLDRYPLKTYEIDSNLCEKMRARLRAEKKPFQLELVEKDALFLKEEEPYFLISNLPYYIATRLVLNALKDPKCRGLLVMTQKEVALKFCAKDSQNALSVLAHTIGNATLLFDVPPSAFSPPPKVFSSVFEVIKEPLKEKALASLAQAPFFEEALQKGFETLEDFLKACFSSPRKTLSNNLKKSVSYKEKLDKVLDFLALENQPTSVRASEVKDYLKLLKSVLKG.

S-adenosyl-L-methionine-binding residues include histidine 11, leucine 13, glycine 38, glutamate 58, aspartate 86, and asparagine 101.

It belongs to the class I-like SAM-binding methyltransferase superfamily. rRNA adenine N(6)-methyltransferase family. RsmA subfamily.

Its subcellular location is the cytoplasm. It carries out the reaction adenosine(1518)/adenosine(1519) in 16S rRNA + 4 S-adenosyl-L-methionine = N(6)-dimethyladenosine(1518)/N(6)-dimethyladenosine(1519) in 16S rRNA + 4 S-adenosyl-L-homocysteine + 4 H(+). In terms of biological role, specifically dimethylates two adjacent adenosines (A1518 and A1519) in the loop of a conserved hairpin near the 3'-end of 16S rRNA in the 30S particle. May play a critical role in biogenesis of 30S subunits. The sequence is that of Ribosomal RNA small subunit methyltransferase A from Helicobacter pylori (strain J99 / ATCC 700824) (Campylobacter pylori J99).